A 475-amino-acid polypeptide reads, in one-letter code: Aspartyl/glutamyl-tRNA(Asn/Gln) amidotransferase subunit B (475 aa).

Belongs to the GatB/GatE family. GatB subfamily. Heterotrimer of A, B and C subunits.

It catalyses the reaction L-glutamyl-tRNA(Gln) + L-glutamine + ATP + H2O = L-glutaminyl-tRNA(Gln) + L-glutamate + ADP + phosphate + H(+). It carries out the reaction L-aspartyl-tRNA(Asn) + L-glutamine + ATP + H2O = L-asparaginyl-tRNA(Asn) + L-glutamate + ADP + phosphate + 2 H(+). Functionally, allows the formation of correctly charged Asn-tRNA(Asn) or Gln-tRNA(Gln) through the transamidation of misacylated Asp-tRNA(Asn) or Glu-tRNA(Gln) in organisms which lack either or both of asparaginyl-tRNA or glutaminyl-tRNA synthetases. The reaction takes place in the presence of glutamine and ATP through an activated phospho-Asp-tRNA(Asn) or phospho-Glu-tRNA(Gln). The sequence is that of Aspartyl/glutamyl-tRNA(Asn/Gln) amidotransferase subunit B from Caldanaerobacter subterraneus subsp. tengcongensis (strain DSM 15242 / JCM 11007 / NBRC 100824 / MB4) (Thermoanaerobacter tengcongensis).